Consider the following 640-residue polypeptide: Threonine--tRNA ligase (640 aa).

Positions 1 to 60 (MKITFPDGAVKEFEPGVSTADIAASISPGLKKKALAGKLNGELLDLVTPIHEDGAIEIVT) constitute a TGS domain. Positions 241 to 538 (DHRKLGKELD…LIEEYKGAFP (298 aa)) are catalytic. Residues C334, H385, and H515 each contribute to the Zn(2+) site.

This sequence belongs to the class-II aminoacyl-tRNA synthetase family. In terms of assembly, homodimer. It depends on Zn(2+) as a cofactor.

The protein resides in the cytoplasm. It catalyses the reaction tRNA(Thr) + L-threonine + ATP = L-threonyl-tRNA(Thr) + AMP + diphosphate + H(+). In terms of biological role, catalyzes the attachment of threonine to tRNA(Thr) in a two-step reaction: L-threonine is first activated by ATP to form Thr-AMP and then transferred to the acceptor end of tRNA(Thr). Also edits incorrectly charged L-seryl-tRNA(Thr). The sequence is that of Threonine--tRNA ligase from Listeria monocytogenes serotype 4b (strain CLIP80459).